The following is a 309-amino-acid chain: tRNA pseudouridine synthase B (309 aa).

The active-site Nucleophile is the Asp-39.

It belongs to the pseudouridine synthase TruB family. Type 1 subfamily.

The catalysed reaction is uridine(55) in tRNA = pseudouridine(55) in tRNA. Its function is as follows. Responsible for synthesis of pseudouridine from uracil-55 in the psi GC loop of transfer RNAs. The sequence is that of tRNA pseudouridine synthase B from Bacillus velezensis (strain DSM 23117 / BGSC 10A6 / LMG 26770 / FZB42) (Bacillus amyloliquefaciens subsp. plantarum).